Here is a 253-residue protein sequence, read N- to C-terminus: Imidazole glycerol phosphate synthase subunit HisF (253 aa).

Active-site residues include D11 and D130.

Belongs to the HisA/HisF family. Heterodimer of HisH and HisF.

The protein resides in the cytoplasm. It carries out the reaction 5-[(5-phospho-1-deoxy-D-ribulos-1-ylimino)methylamino]-1-(5-phospho-beta-D-ribosyl)imidazole-4-carboxamide + L-glutamine = D-erythro-1-(imidazol-4-yl)glycerol 3-phosphate + 5-amino-1-(5-phospho-beta-D-ribosyl)imidazole-4-carboxamide + L-glutamate + H(+). The protein operates within amino-acid biosynthesis; L-histidine biosynthesis; L-histidine from 5-phospho-alpha-D-ribose 1-diphosphate: step 5/9. In terms of biological role, IGPS catalyzes the conversion of PRFAR and glutamine to IGP, AICAR and glutamate. The HisF subunit catalyzes the cyclization activity that produces IGP and AICAR from PRFAR using the ammonia provided by the HisH subunit. This Acetivibrio thermocellus (strain ATCC 27405 / DSM 1237 / JCM 9322 / NBRC 103400 / NCIMB 10682 / NRRL B-4536 / VPI 7372) (Clostridium thermocellum) protein is Imidazole glycerol phosphate synthase subunit HisF.